Here is a 491-residue protein sequence, read N- to C-terminus: 3-octaprenyl-4-hydroxybenzoate carboxy-lyase (491 aa).

Asn-176 provides a ligand contact to Mn(2+). Residues 179 to 181 (IYR), 193 to 195 (RWL), and 198 to 199 (RG) each bind prenylated FMN. Glu-242 lines the Mn(2+) pocket. Asp-291 (proton donor) is an active-site residue.

The protein belongs to the UbiD family. As to quaternary structure, homohexamer. Prenylated FMN serves as cofactor. Mn(2+) is required as a cofactor.

The protein localises to the cell membrane. The catalysed reaction is a 4-hydroxy-3-(all-trans-polyprenyl)benzoate + H(+) = a 2-(all-trans-polyprenyl)phenol + CO2. Its pathway is cofactor biosynthesis; ubiquinone biosynthesis. In terms of biological role, catalyzes the decarboxylation of 3-octaprenyl-4-hydroxy benzoate to 2-octaprenylphenol, an intermediate step in ubiquinone biosynthesis. This Chromobacterium violaceum (strain ATCC 12472 / DSM 30191 / JCM 1249 / CCUG 213 / NBRC 12614 / NCIMB 9131 / NCTC 9757 / MK) protein is 3-octaprenyl-4-hydroxybenzoate carboxy-lyase.